A 162-amino-acid polypeptide reads, in one-letter code: SsrA-binding protein (162 aa).

The disordered stretch occupies residues 140 to 162 (EDRRHDIKERETKREMDRAMRRR).

This sequence belongs to the SmpB family.

Its subcellular location is the cytoplasm. Required for rescue of stalled ribosomes mediated by trans-translation. Binds to transfer-messenger RNA (tmRNA), required for stable association of tmRNA with ribosomes. tmRNA and SmpB together mimic tRNA shape, replacing the anticodon stem-loop with SmpB. tmRNA is encoded by the ssrA gene; the 2 termini fold to resemble tRNA(Ala) and it encodes a 'tag peptide', a short internal open reading frame. During trans-translation Ala-aminoacylated tmRNA acts like a tRNA, entering the A-site of stalled ribosomes, displacing the stalled mRNA. The ribosome then switches to translate the ORF on the tmRNA; the nascent peptide is terminated with the 'tag peptide' encoded by the tmRNA and targeted for degradation. The ribosome is freed to recommence translation, which seems to be the essential function of trans-translation. The polypeptide is SsrA-binding protein (Myxococcus xanthus (strain DK1622)).